Reading from the N-terminus, the 156-residue chain is Endoribonuclease YbeY (156 aa).

3 residues coordinate Zn(2+): H117, H121, and H127.

Belongs to the endoribonuclease YbeY family. The cofactor is Zn(2+).

Its subcellular location is the cytoplasm. In terms of biological role, single strand-specific metallo-endoribonuclease involved in late-stage 70S ribosome quality control and in maturation of the 3' terminus of the 16S rRNA. The chain is Endoribonuclease YbeY from Shewanella pealeana (strain ATCC 700345 / ANG-SQ1).